A 290-amino-acid chain; its full sequence is 33 kDa chaperonin (290 aa).

2 disulfide bridges follow: cysteine 231-cysteine 233 and cysteine 263-cysteine 266.

It belongs to the HSP33 family. Post-translationally, under oxidizing conditions two disulfide bonds are formed involving the reactive cysteines. Under reducing conditions zinc is bound to the reactive cysteines and the protein is inactive.

The protein localises to the cytoplasm. In terms of biological role, redox regulated molecular chaperone. Protects both thermally unfolding and oxidatively damaged proteins from irreversible aggregation. Plays an important role in the bacterial defense system toward oxidative stress. In Thermotoga maritima (strain ATCC 43589 / DSM 3109 / JCM 10099 / NBRC 100826 / MSB8), this protein is 33 kDa chaperonin.